The sequence spans 199 residues: Probable adenylyl-sulfate kinase (199 aa).

ATP is bound at residue 34–41; sequence GLSGSGKS. S108 (phosphoserine intermediate) is an active-site residue.

This sequence belongs to the APS kinase family.

The catalysed reaction is adenosine 5'-phosphosulfate + ATP = 3'-phosphoadenylyl sulfate + ADP + H(+). Its pathway is sulfur metabolism; hydrogen sulfide biosynthesis; sulfite from sulfate: step 2/3. Its function is as follows. Catalyzes the synthesis of activated sulfate. This chain is Probable adenylyl-sulfate kinase (yisZ), found in Bacillus subtilis (strain 168).